We begin with the raw amino-acid sequence, 66 residues long: Large ribosomal subunit protein bL35 (66 aa).

It belongs to the bacterial ribosomal protein bL35 family.

The polypeptide is Large ribosomal subunit protein bL35 (Thermomicrobium roseum (strain ATCC 27502 / DSM 5159 / P-2)).